Consider the following 954-residue polypeptide: ATPase 9, plasma membrane-type (954 aa).

The Cytoplasmic segment spans residues 1 to 66 (MAGNKDSSWD…EKKENKVLKF (66 aa)). The helical transmembrane segment at 67–86 (LGFMWNPLSWVMELAAIMAI) threads the bilayer. The Extracellular segment spans residues 87 to 98 (ALANGGGRPPDW). A helical transmembrane segment spans residues 99–119 (QDFVGITVLLIINSTISFIEE). The Cytoplasmic portion of the chain corresponds to 120 to 248 (NNAGNAAAAL…GHFQKVLTAI (129 aa)). The helical transmembrane segment at 249–269 (GNFCICSIAIGMLIEIVVMYP) threads the bilayer. Residues 270-278 (IQKRAYRDG) are Extracellular-facing. Residues 279-296 (IDNLLVLLIGGIPIAMPT) form a helical membrane-spanning segment. Over 297–648 (VLSVTMAIGS…TSRAIFQRMK (352 aa)) the chain is Cytoplasmic. The active-site 4-aspartylphosphate intermediate is Asp-334. Mg(2+) contacts are provided by Asp-593 and Asp-597. The chain crosses the membrane as a helical span at residues 649–670 (NYTIYAVSITIRIVMGFMLLAL). The Extracellular segment spans residues 671 to 675 (IWKFD). Residues 676–698 (FSPFMVLIVAILNDGTIMTISKD) traverse the membrane as a helical segment. The Cytoplasmic portion of the chain corresponds to 699–714 (RVKPSPLPDSWKLKEI). Residues 715 to 735 (FATGVVLGTYLAVMTVVFFWA) form a helical membrane-spanning segment. Residues 736–756 (AESTDFFSAKFGVRSISGNPH) lie on the Extracellular side of the membrane. The helical transmembrane segment at 757-777 (ELTAAVYLQVSIVSQALIFVT) threads the bilayer. The Cytoplasmic segment spans residues 778–789 (RSRSWSYVERPG). Residues 790–810 (FWLISAFFMAQLIATLIAVYA) form a helical membrane-spanning segment. Residues 811 to 818 (NWNFARIR) lie on the Extracellular side of the membrane. A helical transmembrane segment spans residues 819–839 (GIGWGWAGVIWLYSIVFYIPL). The Cytoplasmic portion of the chain corresponds to 840–954 (DILKFIIRYS…IEAIQQHYTL (115 aa)). At Thr-886 the chain carries Phosphothreonine. Phosphoserine is present on Ser-936. An interaction with 14-3-3 proteins region spans residues 952–954 (YTL). At Thr-953 the chain carries Phosphothreonine.

It belongs to the cation transport ATPase (P-type) (TC 3.A.3) family. Type IIIA subfamily. In terms of assembly, binds to 14-3-3 proteins. The binding is induced by phosphorylation of Thr-953. Binding to 14-3-3 proteins activates the H(+)-ATPase. Anther specific. Expressed in guard cells.

It is found in the membrane. The catalysed reaction is ATP + H2O + H(+)(in) = ADP + phosphate + 2 H(+)(out). The plasma membrane H(+) ATPase of plants and fungi generates a proton gradient that drives the active transport of nutrients by H(+)-symport. The resulting external acidification and/or internal alkinization may mediate growth responses. In Arabidopsis thaliana (Mouse-ear cress), this protein is ATPase 9, plasma membrane-type (AHA9).